The following is a 158-amino-acid chain: Ribosome maturation factor RimP (158 aa).

This sequence belongs to the RimP family.

The protein resides in the cytoplasm. In terms of biological role, required for maturation of 30S ribosomal subunits. This chain is Ribosome maturation factor RimP, found in Pseudomonas syringae pv. tomato (strain ATCC BAA-871 / DC3000).